The chain runs to 257 residues: Tryptophan synthase alpha chain (257 aa).

Catalysis depends on proton acceptor residues glutamate 51 and aspartate 62.

The protein belongs to the TrpA family. In terms of assembly, tetramer of two alpha and two beta chains.

The catalysed reaction is (1S,2R)-1-C-(indol-3-yl)glycerol 3-phosphate + L-serine = D-glyceraldehyde 3-phosphate + L-tryptophan + H2O. It participates in amino-acid biosynthesis; L-tryptophan biosynthesis; L-tryptophan from chorismate: step 5/5. Functionally, the alpha subunit is responsible for the aldol cleavage of indoleglycerol phosphate to indole and glyceraldehyde 3-phosphate. This chain is Tryptophan synthase alpha chain, found in Nitratidesulfovibrio vulgaris (strain DP4) (Desulfovibrio vulgaris).